We begin with the raw amino-acid sequence, 652 residues long: Thioredoxin reductase 3 (652 aa).

Over residues 1–12 (MEKPPSPPPPPR) the composition is skewed to pro residues. The disordered stretch occupies residues 1 to 62 (MEKPPSPPPP…TSRPSSEARE (62 aa)). Position 34 is an asymmetric dimethylarginine; alternate (Arg-34). Arg-34 is modified (omega-N-methylarginine; alternate). Ser-50 is subject to Phosphoserine. One can recognise a Glutaredoxin domain in the interval 65–165 (RRRLRDLIEG…KLLQDDSAHD (101 aa)). 167–196 (DLIIIGGGSGGLSCAKEAANLGKKVMVLDF) is an FAD binding site. A disulfide bridge connects residues Cys-212 and Cys-217. Lys-388 bears the N6-succinyllysine mark. Residue His-625 is the Proton acceptor of the active site. The segment at residues 650-651 (CU) is a cross-link (cysteinyl-selenocysteine (Cys-Sec)). Sec-651 is a non-standard amino acid (selenocysteine).

The protein belongs to the class-I pyridine nucleotide-disulfide oxidoreductase family. Homodimer. FAD serves as cofactor. As to expression, expressed preferentially in testis where it is found in spermatids and spermatocytes but not in sperm. In elongating spermatids, expressed at the site of mitochondrial sheath formation. Low levels in other tissues including heart, lung, liver, kidney, brain, muscle and prostate.

Its subcellular location is the cytoplasm. The protein resides in the nucleus. It localises to the microsome. It is found in the endoplasmic reticulum. It carries out the reaction [thioredoxin]-dithiol + NADP(+) = [thioredoxin]-disulfide + NADPH + H(+). Displays thioredoxin reductase, glutaredoxin and glutathione reductase activities. Catalyzes disulfide bond isomerization. Promotes disulfide bond formation between GPX4 and various sperm proteins and may play a role in sperm maturation by promoting formation of sperm structural components. This chain is Thioredoxin reductase 3, found in Mus musculus (Mouse).